Reading from the N-terminus, the 1097-residue chain is Leukemia inhibitory factor receptor (1097 aa).

A signal peptide spans methionine 1–serine 44. At glutamine 45 to serine 833 the chain is on the extracellular side. The region spanning alanine 49–threonine 138 is the Fibronectin type-III 1 domain. 2 disulfide bridges follow: cysteine 55–cysteine 65 and cysteine 82–cysteine 90. 7 N-linked (GlcNAc...) asparagine glycosylation sites follow: asparagine 64, asparagine 85, asparagine 131, asparagine 143, asparagine 191, asparagine 243, and asparagine 303. An intrachain disulfide couples cysteine 213 to cysteine 270. 5 Fibronectin type-III domains span residues threonine 335–histidine 434, threonine 435–serine 534, glycine 538–aspartate 629, proline 627–isoleucine 719, and proline 724–serine 833. The cysteines at positions 341 and 351 are disulfide-linked. N-linked (GlcNAc...) asparagine glycans are attached at residues asparagine 390, asparagine 407, asparagine 426, asparagine 445, asparagine 481, and asparagine 489. Cysteine 466 and cysteine 511 form a disulfide bridge. A WSXWS motif motif is present at residues tryptophan 519–serine 523. Asparagine 572, asparagine 652, asparagine 663, asparagine 680, asparagine 729, and asparagine 787 each carry an N-linked (GlcNAc...) asparagine glycan. The helical transmembrane segment at valine 834–cysteine 858 threads the bilayer. Over tyrosine 859–aspartate 1097 the chain is Cytoplasmic. A Box 1 motif motif is present at residues phenylalanine 869 to glutamate 877. Serine 927 is subject to Phosphoserine. Positions proline 983–methionine 1005 are disordered. The residue at position 1044 (serine 1044) is a Phosphoserine. Residues arginine 1066 to aspartate 1097 form a disordered region. A compositionally biased stretch (polar residues) spans serine 1086–aspartate 1097.

Belongs to the type I cytokine receptor family. Type 2 subfamily. As to quaternary structure, heterodimer composed of LIFR and IL6ST. The heterodimer formed by LIFR and IL6ST interacts with the complex formed by CNTF and CNTFR.

The protein localises to the cell membrane. It is found in the secreted. In terms of biological role, signal-transducing molecule. May have a common pathway with IL6ST. The soluble form inhibits the biological activity of LIF by blocking its binding to receptors on target cells. This Homo sapiens (Human) protein is Leukemia inhibitory factor receptor (LIFR).